Consider the following 491-residue polypeptide: Limb region 1 homolog-like protein (491 aa).

Residues 1–20 (METEDVTVREQIFHDRVRET) are Extracellular-facing. A helical membrane pass occupies residues 21-41 (IICVLLFICLYILSHFILTHF). The Cytoplasmic portion of the chain corresponds to 42–59 (KKSAEFVTDDIEDATVNK). The chain crosses the membrane as a helical span at residues 60 to 80 (IALWLCTFTLSVAVCAVLLLP). The Extracellular portion of the chain corresponds to 81–111 (ISILSNEVLLTFPHSYYMQWLNGSLIRGLWN). A helical transmembrane segment spans residues 112-132 (LVFLFSNLSLVFLMPFAYFFT). The Cytoplasmic portion of the chain corresponds to 133–152 (ESEGFAGSKKGVMARVYETA). A helical transmembrane segment spans residues 153 to 173 (VMLLLLSLLVLGIVWVASALL). The Extracellular portion of the chain corresponds to 174 to 192 (HHNTARESLYDLWEYYLPY). A helical membrane pass occupies residues 193 to 213 (LYSGISLFGVLLLLLCTPFGL). Over 214–292 (SRMFSVTGSL…RKRASPWQRN (79 aa)) the chain is Cytoplasmic. Residues 293–313 (LVYPVAMLLLLALTAVSVLMV) traverse the membrane as a helical segment. The Extracellular portion of the chain corresponds to 314–346 (CFHVLELLFDESAMPRGMEDPHLGLASFSMLGS). Residues 347 to 367 (LGAAVQVVIILYLMVSSVVGF) form a helical membrane-spanning segment. The Cytoplasmic portion of the chain corresponds to 368 to 384 (YSSPLFTGLLPRAQDTT). A helical membrane pass occupies residues 385 to 405 (LTQIIGNCVSLLILSSALPVF). The Extracellular segment spans residues 406–427 (SRTLGITKFDLLGDFGRHDWLG). The helical transmembrane segment at 428–448 (SFHIVFLYNMLFAGLTSACLI) threads the bilayer. Over 449-491 (NTVTWALQRELIRAFGLHRLPLTVSRSTIPLKLLLANGLSKIH) the chain is Cytoplasmic.

Belongs to the LIMR family. Dimer. Can also form higher oligomers.

It localises to the cell membrane. The protein resides in the endoplasmic reticulum membrane. Functionally, may play a role in lymphocyte development by negatively regulating the canonical Wnt signaling pathway. May act as a LCN1 receptor. The sequence is that of Limb region 1 homolog-like protein (lmbr1l) from Danio rerio (Zebrafish).